A 476-amino-acid polypeptide reads, in one-letter code: Trigger factor (476 aa).

The 86-residue stretch at 169–254 (GDKVTLDYVG…VKEVAAAEEL (86 aa)) folds into the PPIase FKBP-type domain. Residues 437 to 476 (SRDELLAEDEAEGEEKKAAGETKKKAAPKKKAAKKESAAE) form a disordered region. Over residues 450–460 (EEKKAAGETKK) the composition is skewed to basic and acidic residues.

This sequence belongs to the FKBP-type PPIase family. Tig subfamily.

It is found in the cytoplasm. It catalyses the reaction [protein]-peptidylproline (omega=180) = [protein]-peptidylproline (omega=0). Involved in protein export. Acts as a chaperone by maintaining the newly synthesized protein in an open conformation. Functions as a peptidyl-prolyl cis-trans isomerase. This is Trigger factor from Chelativorans sp. (strain BNC1).